A 788-amino-acid polypeptide reads, in one-letter code: LPS-assembly protein LptD (788 aa).

An N-terminal signal peptide occupies residues 1–23; it reads MSLTSRSLLATMISLALYGPAMA.

It belongs to the LptD family. As to quaternary structure, component of the lipopolysaccharide transport and assembly complex. Interacts with LptE and LptA.

Its subcellular location is the cell outer membrane. Its function is as follows. Together with LptE, is involved in the assembly of lipopolysaccharide (LPS) at the surface of the outer membrane. The protein is LPS-assembly protein LptD of Photobacterium profundum (strain SS9).